We begin with the raw amino-acid sequence, 191 residues long: NF-kappa-B inhibitor-interacting Ras-like protein 2 (191 aa).

The interval 1–191 is small GTPase-like; sequence MGKSCKVVVC…KNKGSGSLDG (191 aa). Position 11 to 18 (11 to 18) interacts with GTP; the sequence is GQASVGKT. Positions 35-43 match the Effector region motif; the sequence is MIETQEDIY. Residues 61-65 and 120-123 contribute to the GTP site; these read DTRGL and NKCD. The tract at residues 169 to 191 is disordered; it reads TQPQSKSAFPLSRKNKGSGSLDG.

It belongs to the small GTPase superfamily. Ras family. KappaB-Ras subfamily. As to quaternary structure, interacts with both NF-kappa-B inhibitor alpha (NFKBIA) and beta (NFKBIB) in vitro. However, it probably only interacts with NFKBIB in vivo. Interacts with GFOD1.

It is found in the cytoplasm. Atypical Ras-like protein that acts as a potent regulator of NF-kappa-B activity by preventing the degradation of NF-kappa-B inhibitor beta (NFKBIB) by most signals, explaining why NFKBIB is more resistant to degradation. May act by blocking phosphorylation of NFKBIB and nuclear localization of p65/RELA NF-kappa-B subunit. It is unclear whether it acts as a GTPase. Both GTP- and GDP-bound forms block phosphorylation of NFKBIB. This is NF-kappa-B inhibitor-interacting Ras-like protein 2 (Nkiras2) from Mus musculus (Mouse).